The sequence spans 426 residues: MLDSKLVRTQLQEIVGRLATRGFQLDVARFESLEAQRKAVQTRTEQLQAERNARSKTIGQAKSRGEDIAPLLAEVDRMGSDLEAGKRELDAIQAELDALMLSIPNLPHESVPVGADEEDNVEVRRWGVPRTFDFAIKDHVALGERHGWLDFETAAKLSGARFALMRGPIARLHRALAQFMLDLHTGEHGYEEAYTPYLVQAPALQGTGQLPKFEEDLFKISREGEADFYLIPTAEVSLTNIVAGEILDARQLPLKFVAHTPCFRSEAGASGRDTRGMIRQHQFDKVEMVRIVDPAKSYEALEELTANAEKVLQRLELPYRVLALCTGDMGFSATKTYDLEVWVPSQDKYREISSCSNCGDFQARRMQARWRNPETGKPELVHTLNGSGLAVGRTLVAVLENYQQADGSIRVPEVLKPYMGGIEVIG.

Residue 233-235 participates in L-serine binding; sequence TAE. 264 to 266 contributes to the ATP binding site; the sequence is RSE. An L-serine-binding site is contributed by Glu287. Residue 351–354 participates in ATP binding; that stretch reads EISS. Ser387 is an L-serine binding site.

The protein belongs to the class-II aminoacyl-tRNA synthetase family. Type-1 seryl-tRNA synthetase subfamily. As to quaternary structure, homodimer. The tRNA molecule binds across the dimer.

The protein resides in the cytoplasm. It catalyses the reaction tRNA(Ser) + L-serine + ATP = L-seryl-tRNA(Ser) + AMP + diphosphate + H(+). The enzyme catalyses tRNA(Sec) + L-serine + ATP = L-seryl-tRNA(Sec) + AMP + diphosphate + H(+). Its pathway is aminoacyl-tRNA biosynthesis; selenocysteinyl-tRNA(Sec) biosynthesis; L-seryl-tRNA(Sec) from L-serine and tRNA(Sec): step 1/1. Catalyzes the attachment of serine to tRNA(Ser). Is also able to aminoacylate tRNA(Sec) with serine, to form the misacylated tRNA L-seryl-tRNA(Sec), which will be further converted into selenocysteinyl-tRNA(Sec). This chain is Serine--tRNA ligase, found in Azotobacter vinelandii (strain DJ / ATCC BAA-1303).